The chain runs to 309 residues: Sulfate adenylyltransferase subunit 2 (309 aa).

Belongs to the PAPS reductase family. CysD subfamily. As to quaternary structure, heterodimer composed of CysD, the smaller subunit, and CysN.

The catalysed reaction is sulfate + ATP + H(+) = adenosine 5'-phosphosulfate + diphosphate. Its pathway is sulfur metabolism; hydrogen sulfide biosynthesis; sulfite from sulfate: step 1/3. Its function is as follows. With CysN forms the ATP sulfurylase (ATPS) that catalyzes the adenylation of sulfate producing adenosine 5'-phosphosulfate (APS) and diphosphate, the first enzymatic step in sulfur assimilation pathway. APS synthesis involves the formation of a high-energy phosphoric-sulfuric acid anhydride bond driven by GTP hydrolysis by CysN coupled to ATP hydrolysis by CysD. The polypeptide is Sulfate adenylyltransferase subunit 2 (Mycolicibacterium gilvum (strain PYR-GCK) (Mycobacterium gilvum (strain PYR-GCK))).